The following is a 485-amino-acid chain: E-selectin (485 aa).

The first 22 residues, 1-22 (MIVSQYLSALTFVLLLFKESRT), serve as a signal peptide directing secretion. The 118-residue stretch at 23–140 (WSYHASTEMM…CTKQKLALCY (118 aa)) folds into the C-type lectin domain. The Extracellular portion of the chain corresponds to 23–430 (WSYHASTEMM…CEAPTVSQTP (408 aa)). 15 disulfide bridges follow: Cys41-Cys139, Cys112-Cys131, Cys144-Cys155, Cys149-Cys164, Cys166-Cys175, Cys181-Cys224, Cys194-Cys206, Cys210-Cys237, Cys242-Cys286, Cys255-Cys268, Cys272-Cys299, Cys304-Cys349, Cys335-Cys362, Cys367-Cys408, and Cys394-Cys421. Residues Asn61, Asn79, and Asn88 are each glycosylated (N-linked (GlcNAc...) asparagine). Glu102, Asn104, and Glu110 together coordinate Ca(2+). Residues 102-110 (EPNNKQSDE), 114-119 (EIYIKR), and 127-129 (NDE) contribute to the a carbohydrate site. 2 residues coordinate Ca(2+): Asn127 and Asp128. Residues 141 to 176 (KAACNPTPCGSHGECVETINNYTCQCHPGFKGLKCE) form the EGF-like domain. Residue Asn161 is glycosylated (N-linked (GlcNAc...) asparagine). Sushi domains lie at 179-239 (VTCP…KCNV), 240-301 (VKCD…TCKA), 302-364 (VSCA…VCEV), and 365-423 (VRCS…TCEA). The N-linked (GlcNAc...) asparagine glycan is linked to Asn203. N-linked (GlcNAc...) asparagine glycosylation is present at Asn265. 2 N-linked (GlcNAc...) asparagine glycosylation sites follow: Asn312 and Asn316. Residues Asn379 and Asn401 are each glycosylated (N-linked (GlcNAc...) asparagine). Residues 431–453 (LAVGLSTAGVSLVTIPSFLFWLL) form a helical membrane-spanning segment. The Cytoplasmic segment spans residues 454 to 485 (KRLQKKAKKFSPASSCSSLKSNGCYSTPSKLI). The segment at 466 to 485 (ASSCSSLKSNGCYSTPSKLI) is disordered.

It belongs to the selectin/LECAM family. In terms of assembly, interacts with SELPLG/PSGL1 and PODXL2 through the sialyl Lewis X epitope. SELPLG sulfation appears not to be required for this interaction.

It localises to the cell membrane. In terms of biological role, cell-surface glycoprotein having a role in immunoadhesion. Mediates in the adhesion of blood neutrophils in cytokine-activated endothelium through interaction with SELPLG/PSGL1. May have a role in capillary morphogenesis. This Bos taurus (Bovine) protein is E-selectin (SELE).